Consider the following 530-residue polypeptide: Cation transporter HKT2;1 (530 aa).

The Cytoplasmic segment spans residues 1–40 (MTSIYHDFIHNKLQSFGRIGRYFVNFVVLAHRFIALHIHP). 2 helical membrane-spanning segments follow: residues 41–61 (FWIQ…LLMF) and 102–122 (IVVI…FLGL). The Cytoplasmic portion of the chain corresponds to 123-186 (MLRLNHKHNP…DLKRSKRLRW (64 aa)). Transmembrane regions (helical) follow at residues 187 to 207 (FLGF…FLLV) and 260 to 280 (GLLL…PLFL). Residues 281-317 (RLLIWFLGKVTKLRELKLMIKNPEELQYDYLLPKLPT) are Cytoplasmic-facing. Transmembrane regions (helical) follow at residues 318-338 (AFLA…FGAV) and 372-392 (IDCS…MYLP). At 393-418 (PSTTFALSNGDEKTANKKAKRKLGLV) the chain is on the cytoplasmic side. 2 consecutive transmembrane segments (helical) span residues 419-439 (VQNL…VAFI) and 494-514 (SLSG…MLYG). Over 515–530 (RLKAFTKGTGEYWRLW) the chain is Cytoplasmic.

This sequence belongs to the TrkH potassium transport family. HKT (TC 2.A.38.3) subfamily. Expressed in epidermis and vascular tissue of endodermis in roots, and in cells surrounding the vasculature in leaves.

The protein localises to the membrane. It carries out the reaction Na(+)(in) = Na(+)(out). Its function is as follows. Seems to be involved in regulation of potassium-sodium homeostasis. Seems to act as a high-affinity sodium transporter, which mediates increased sodium uptake in roots under potassium deficiency and contributes to sodium accumulation and salt toxicity. Involved in nutritional sodium uptake and distribution in potassium-starved roots to allow plant growth. May also act as a potassium transporter. Functions as a sodium-potassium cotransporter. This Oryza sativa subsp. indica (Rice) protein is Cation transporter HKT2;1.